We begin with the raw amino-acid sequence, 112 residues long: 2Fe-2S ferredoxin (112 aa).

The 103-residue stretch at 5–107 (IKVTFIINDG…GIKVHLPAAT (103 aa)) folds into the 2Fe-2S ferredoxin-type domain. The [2Fe-2S] cluster site is built by C42, C48, C51, and C88.

This sequence belongs to the adrenodoxin/putidaredoxin family. The cofactor is [2Fe-2S] cluster.

Its function is as follows. Ferredoxin are iron-sulfur proteins that transfer electrons in a wide variety of metabolic reactions. The sequence is that of 2Fe-2S ferredoxin (fdxB) from Rickettsia rickettsii.